Reading from the N-terminus, the 171-residue chain is Transcription factor E (171 aa).

The 87-residue stretch at 5–91 folds into the HTH TFE/IIEalpha-type domain; that stretch reads DNKAVRGYIQ…LWKLDLDNSV (87 aa).

It belongs to the TFE family. As to quaternary structure, monomer. Interaction with RNA polymerase subunits RpoF and RpoE is necessary for Tfe stimulatory transcription activity. Able to interact with Tbp and RNA polymerase in the absence of DNA promoter. Interacts both with the preinitiation and elongation complexes.

In terms of biological role, transcription factor that plays a role in the activation of archaeal genes transcribed by RNA polymerase. Facilitates transcription initiation by enhancing TATA-box recognition by TATA-box-binding protein (Tbp), and transcription factor B (Tfb) and RNA polymerase recruitment. Not absolutely required for transcription in vitro, but particularly important in cases where Tbp or Tfb function is not optimal. It dynamically alters the nucleic acid-binding properties of RNA polymerases by stabilizing the initiation complex and destabilizing elongation complexes. Seems to translocate with the RNA polymerase following initiation and acts by binding to the non template strand of the transcription bubble in elongation complexes. The protein is Transcription factor E of Methanocella arvoryzae (strain DSM 22066 / NBRC 105507 / MRE50).